The sequence spans 142 residues: Ribosome-binding factor A (142 aa).

The disordered stretch occupies residues valine 123–histidine 142. Positions serine 129–histidine 142 are enriched in acidic residues.

This sequence belongs to the RbfA family. In terms of assembly, monomer. Binds 30S ribosomal subunits, but not 50S ribosomal subunits or 70S ribosomes.

The protein localises to the cytoplasm. Its function is as follows. One of several proteins that assist in the late maturation steps of the functional core of the 30S ribosomal subunit. Associates with free 30S ribosomal subunits (but not with 30S subunits that are part of 70S ribosomes or polysomes). Required for efficient processing of 16S rRNA. May interact with the 5'-terminal helix region of 16S rRNA. The polypeptide is Ribosome-binding factor A (Methylobacterium radiotolerans (strain ATCC 27329 / DSM 1819 / JCM 2831 / NBRC 15690 / NCIMB 10815 / 0-1)).